A 434-amino-acid chain; its full sequence is Salicylate hydroxylase (434 aa).

9–38 is an FAD binding site; that stretch reads RIGIVGGGISGVALALELCRYSHIQVQLFE.

In terms of assembly, monomer. The cofactor is FAD.

It catalyses the reaction salicylate + NADH + O2 + 2 H(+) = catechol + CO2 + NAD(+) + H2O. The protein operates within aromatic compound metabolism; naphthalene degradation. This chain is Salicylate hydroxylase (nahG), found in Pseudomonas putida (Arthrobacter siderocapsulatus).